Reading from the N-terminus, the 491-residue chain is Ubiquitin carboxyl-terminal hydrolase 30 (491 aa).

The Mitochondrial intermembrane segment spans residues 1 to 31 (MPWCKQGTTDKLVREFLRTGAAARNKMMKNW). A helical transmembrane segment spans residues 32 to 52 (GVIGGIAAAMAAGVYVLWGPI). Topologically, residues 53 to 491 (SDRRKKRKGM…MQRPGLRVEE (439 aa)) are cytoplasmic. The 419-residue stretch at 64–482 (PGLLNLGNTC…SAYLLFYERM (419 aa)) folds into the USP domain. The active-site Nucleophile is Cys73. Residues 346–355 (AQSQQKTSRT) are compositionally biased toward polar residues. The disordered stretch occupies residues 346-365 (AQSQQKTSRTNKAKASADPK). The active-site Proton acceptor is the His432.

This sequence belongs to the peptidase C19 family.

The protein localises to the mitochondrion outer membrane. It catalyses the reaction Thiol-dependent hydrolysis of ester, thioester, amide, peptide and isopeptide bonds formed by the C-terminal Gly of ubiquitin (a 76-residue protein attached to proteins as an intracellular targeting signal).. Functionally, deubiquitinating enzyme that acts as a key inhibitor of mitophagy by counteracting the action of parkin (PRKN). The protein is Ubiquitin carboxyl-terminal hydrolase 30 (usp30) of Danio rerio (Zebrafish).